Consider the following 125-residue polypeptide: Mitochondrial import inner membrane translocase subunit TIM16 (125 aa).

Positions 58–110 are J-like; that stretch reads EAQQILNVSKLSPEEVQKNYEHLFKVNDKSVGGSFYLQSKVVRAKERLDEELR. Serine 69 carries the post-translational modification Phosphoserine.

The protein belongs to the TIM16/PAM16 family. Probable component of the PAM complex at least composed of a mitochondrial HSP70 protein, GRPEL1 or GRPEL2, TIMM44, TIMM16/PAM16 and TIMM14/DNAJC19. Interacts with DNAJC19. Directly interacts with DNAJC15; this interaction counteracts DNAJC15-dependent stimulation of HSPA9 ATPase activity. Associates with the TIM23 complex. As to expression, expressed in trabecular bone and cartilage and by differentiated chondrocytes localized in the hypertrophic zone and by osteoblasts at early developmental stages.

The protein resides in the mitochondrion inner membrane. In terms of biological role, regulates ATP-dependent protein translocation into the mitochondrial matrix. Inhibits DNAJC19 stimulation of HSPA9/Mortalin ATPase activity. In Mus musculus (Mouse), this protein is Mitochondrial import inner membrane translocase subunit TIM16.